Consider the following 176-residue polypeptide: Large ribosomal subunit protein uL6 (176 aa).

It belongs to the universal ribosomal protein uL6 family. Part of the 50S ribosomal subunit.

Its function is as follows. This protein binds to the 23S rRNA, and is important in its secondary structure. It is located near the subunit interface in the base of the L7/L12 stalk, and near the tRNA binding site of the peptidyltransferase center. This Methanospirillum hungatei JF-1 (strain ATCC 27890 / DSM 864 / NBRC 100397 / JF-1) protein is Large ribosomal subunit protein uL6.